The following is a 498-amino-acid chain: L-proline--[L-prolyl-carrier protein] ligase (498 aa).

This sequence belongs to the ATP-dependent AMP-binding enzyme family.

The catalysed reaction is holo-[peptidyl-carrier protein] + L-proline + ATP = L-prolyl-[peptidyl-carrier protein] + AMP + diphosphate. Functionally, involved in the biosynthesis of pyoluteorin. Catalyzes the conversion of L-proline to L-prolyl-AMP and the transfer of the L-prolyl group to acyl carrier protein PltL. This chain is L-proline--[L-prolyl-carrier protein] ligase, found in Pseudomonas fluorescens (strain ATCC BAA-477 / NRRL B-23932 / Pf-5).